The chain runs to 290 residues: MPILQRASHHELRSAFRALLASERCYHTASVFDPMSARIAADLDFEVGILGGSVASLQVLGAPDFALITLSEFVEQAARIGRVARLPVIADADHGYGNALNVMRTVVELERAGVAALTIEDTLLPAQFGRKSTDLISIEEGVGKILAALEARVDPELSIIARTHAGVLEVDEVIRRTRAYEAAGADGICLVGVKDFAHLEQIAAGLKVPLMLVTYGNPELRDNQRLARLGVRIVVNGHAAYFAAIKATYDCLREQRGAQPCDLNATELTHKYTMPEDYILWAKEFMEVRE.

Substrate is bound at residue S53. D91 lines the Mg(2+) pocket. The substrate site is built by R162 and H238.

Belongs to the isocitrate lyase/PEP mutase superfamily. Oxaloacetate decarboxylase family. As to quaternary structure, homotetramer; dimer of dimers. Mg(2+) serves as cofactor.

The enzyme catalyses oxaloacetate + H(+) = pyruvate + CO2. In terms of biological role, catalyzes the decarboxylation of oxaloacetate into pyruvate. Seems to play a role in maintaining cellular concentrations of bicarbonate and pyruvate. In Ectopseudomonas mendocina (strain ymp) (Pseudomonas mendocina), this protein is Oxaloacetate decarboxylase.